Reading from the N-terminus, the 236-residue chain is Phosphoserine phosphatase (236 aa).

Residue D30 is the Nucleophile of the active site. The Mg(2+) site is built by D30 and D32. D32 functions as the Proton donor in the catalytic mechanism. Substrate-binding positions include E39, R76, 120–121 (SG), and K169. D192 provides a ligand contact to Mg(2+). N195 contacts substrate.

Belongs to the HAD-like hydrolase superfamily. SerB family. It depends on Mg(2+) as a cofactor.

The enzyme catalyses O-phospho-L-serine + H2O = L-serine + phosphate. It catalyses the reaction O-phospho-D-serine + H2O = D-serine + phosphate. It participates in amino-acid biosynthesis; L-serine biosynthesis; L-serine from 3-phospho-D-glycerate: step 3/3. The chain is Phosphoserine phosphatase from Polaromonas sp. (strain JS666 / ATCC BAA-500).